A 245-amino-acid chain; its full sequence is 1-(5-phosphoribosyl)-5-[(5-phosphoribosylamino)methylideneamino] imidazole-4-carboxamide isomerase (245 aa).

D7 functions as the Proton acceptor in the catalytic mechanism. The active-site Proton donor is the D129.

Belongs to the HisA/HisF family.

The protein resides in the cytoplasm. The catalysed reaction is 1-(5-phospho-beta-D-ribosyl)-5-[(5-phospho-beta-D-ribosylamino)methylideneamino]imidazole-4-carboxamide = 5-[(5-phospho-1-deoxy-D-ribulos-1-ylimino)methylamino]-1-(5-phospho-beta-D-ribosyl)imidazole-4-carboxamide. It participates in amino-acid biosynthesis; L-histidine biosynthesis; L-histidine from 5-phospho-alpha-D-ribose 1-diphosphate: step 4/9. The protein is 1-(5-phosphoribosyl)-5-[(5-phosphoribosylamino)methylideneamino] imidazole-4-carboxamide isomerase of Idiomarina loihiensis (strain ATCC BAA-735 / DSM 15497 / L2-TR).